Reading from the N-terminus, the 34-residue chain is Photosystem II reaction center protein Psb30 (34 aa).

A helical transmembrane segment spans residues 6 to 26; that stretch reads VIGQLLSATLIVLAGPAVIFV.

The protein belongs to the Psb30/Ycf12 family. PSII is composed of 1 copy each of membrane proteins PsbA, PsbB, PsbC, PsbD, PsbE, PsbF, PsbH, PsbI, PsbJ, PsbK, PsbL, PsbM, PsbT, PsbX, PsbY, PsbZ, Psb30/Ycf12, peripheral proteins of the oxygen-evolving complex and a large number of cofactors. It forms dimeric complexes.

It localises to the plastid. It is found in the chloroplast thylakoid membrane. A core subunit of photosystem II (PSII), probably helps stabilize the reaction center. The chain is Photosystem II reaction center protein Psb30 from Heterosigma akashiwo (strain NIES-293 / 8280G21-1).